The sequence spans 555 residues: Energy-dependent translational throttle protein EttA (555 aa).

2 ABC transporter domains span residues 6 to 259 (YTMH…AQEA) and 324 to 550 (LEVS…RIKY). Residue 39–46 (GLNGAGKS) participates in ATP binding. An arm region spans residues 95 to 139 (SEVVNALKRLDEVYALYADPDADFDKLAAEQGRLEEIIQAHDGHN). Residues 242-322 (GNYSSWLEQK…IPPGPRLGDK (81 aa)) form a ptIM region. 356-363 (GPNGAGKS) provides a ligand contact to ATP.

The protein belongs to the ABC transporter superfamily. ABCF family. Translational throttle EttA subfamily. As to quaternary structure, monomer. Probably contacts ribosomal proteins L1, L5, L33 and S7, the 16S and 23S rRNA and the P-site containing tRNA(fMet).

The protein resides in the cytoplasm. The enzyme catalyses ATP + H2O = ADP + phosphate + H(+). A translation factor that gates the progression of the 70S ribosomal initiation complex (IC, containing tRNA(fMet) in the P-site) into the translation elongation cycle by using a mechanism sensitive to the ATP/ADP ratio. Binds to the 70S ribosome E-site where it modulates the state of the translating ribosome during subunit translocation. ATP hydrolysis probably frees it from the ribosome, which can enter the elongation phase. This is Energy-dependent translational throttle protein EttA from Escherichia coli O6:H1 (strain CFT073 / ATCC 700928 / UPEC).